Consider the following 429-residue polypeptide: Adenylosuccinate synthetase (429 aa).

GTP contacts are provided by residues 12–18 (GDEGKGK) and 40–42 (GHT). The active-site Proton acceptor is the Asp13. Mg(2+) is bound by residues Asp13 and Gly40. Residues 13–16 (DEGK), 38–41 (NAGH), Thr128, Arg142, Gln223, Thr238, and Arg302 contribute to the IMP site. The active-site Proton donor is His41. Position 298-304 (298-304 (VNTGRPR)) interacts with substrate. Residues Arg304, 330–332 (KLD), and 412–414 (GVG) each bind GTP.

Belongs to the adenylosuccinate synthetase family. In terms of assembly, homodimer. Mg(2+) is required as a cofactor.

The protein resides in the cytoplasm. The enzyme catalyses IMP + L-aspartate + GTP = N(6)-(1,2-dicarboxyethyl)-AMP + GDP + phosphate + 2 H(+). The protein operates within purine metabolism; AMP biosynthesis via de novo pathway; AMP from IMP: step 1/2. In terms of biological role, plays an important role in the de novo pathway of purine nucleotide biosynthesis. Catalyzes the first committed step in the biosynthesis of AMP from IMP. This chain is Adenylosuccinate synthetase, found in Paenarthrobacter aurescens (strain TC1).